The sequence spans 359 residues: Peptide methionine sulfoxide reductase MsrA/MsrB (359 aa).

The tract at residues Arg-36 to Lys-189 is peptide methionine sulfoxide reductase A. Cys-44 is a catalytic residue. The MsrB domain maps to Asp-206–Leu-329. Catalysis depends on Cys-318, which acts as the Nucleophile.

This sequence in the N-terminal section; belongs to the MsrA Met sulfoxide reductase family. The protein in the C-terminal section; belongs to the MsrB Met sulfoxide reductase family.

The catalysed reaction is L-methionyl-[protein] + [thioredoxin]-disulfide + H2O = L-methionyl-(S)-S-oxide-[protein] + [thioredoxin]-dithiol. It catalyses the reaction [thioredoxin]-disulfide + L-methionine + H2O = L-methionine (S)-S-oxide + [thioredoxin]-dithiol. It carries out the reaction L-methionyl-[protein] + [thioredoxin]-disulfide + H2O = L-methionyl-(R)-S-oxide-[protein] + [thioredoxin]-dithiol. Its function is as follows. Has an important function as a repair enzyme for proteins that have been inactivated by oxidation. Catalyzes the reversible oxidation-reduction of methionine sulfoxide in proteins to methionine. The protein is Peptide methionine sulfoxide reductase MsrA/MsrB (msrAB) of Helicobacter pylori (strain J99 / ATCC 700824) (Campylobacter pylori J99).